The chain runs to 711 residues: Ribosomal RNA large subunit methyltransferase K/L (711 aa).

The region spanning 43–154 (TLYRTLLWSR…RENLVISLDL (112 aa)) is the THUMP domain.

Belongs to the methyltransferase superfamily. RlmKL family.

The protein localises to the cytoplasm. It catalyses the reaction guanosine(2445) in 23S rRNA + S-adenosyl-L-methionine = N(2)-methylguanosine(2445) in 23S rRNA + S-adenosyl-L-homocysteine + H(+). It carries out the reaction guanosine(2069) in 23S rRNA + S-adenosyl-L-methionine = N(2)-methylguanosine(2069) in 23S rRNA + S-adenosyl-L-homocysteine + H(+). Specifically methylates the guanine in position 2445 (m2G2445) and the guanine in position 2069 (m7G2069) of 23S rRNA. The protein is Ribosomal RNA large subunit methyltransferase K/L of Haemophilus influenzae (strain ATCC 51907 / DSM 11121 / KW20 / Rd).